Reading from the N-terminus, the 231-residue chain is Ribose-5-phosphate isomerase A (231 aa).

Substrate is bound by residues T32–T35, D85–D88, and K98–G101. The Proton acceptor role is filled by E107. K125 is a binding site for substrate.

This sequence belongs to the ribose 5-phosphate isomerase family. As to quaternary structure, homodimer.

It carries out the reaction aldehydo-D-ribose 5-phosphate = D-ribulose 5-phosphate. It functions in the pathway carbohydrate degradation; pentose phosphate pathway; D-ribose 5-phosphate from D-ribulose 5-phosphate (non-oxidative stage): step 1/1. In terms of biological role, catalyzes the reversible conversion of ribose-5-phosphate to ribulose 5-phosphate. This is Ribose-5-phosphate isomerase A from Paraburkholderia xenovorans (strain LB400).